Consider the following 182-residue polypeptide: Putative pre-16S rRNA nuclease (182 aa).

It belongs to the YqgF nuclease family.

The protein resides in the cytoplasm. Functionally, could be a nuclease involved in processing of the 5'-end of pre-16S rRNA. The sequence is that of Putative pre-16S rRNA nuclease from Corynebacterium aurimucosum (strain ATCC 700975 / DSM 44827 / CIP 107346 / CN-1) (Corynebacterium nigricans).